We begin with the raw amino-acid sequence, 296 residues long: Probable alpha-L-glutamate ligase (296 aa).

The ATP-grasp domain occupies 104–287 (LQLLARQGID…IATLMITFIE (184 aa)). ATP contacts are provided by residues K141, 178–179 (EF), D187, and 211–213 (RSN). Residues D248, E260, and N262 each contribute to the Mg(2+) site. Mn(2+) contacts are provided by D248, E260, and N262.

Belongs to the RimK family. Mg(2+) serves as cofactor. Requires Mn(2+) as cofactor.

This chain is Probable alpha-L-glutamate ligase, found in Sodalis glossinidius (strain morsitans).